The sequence spans 196 residues: Molybdopterin synthase catalytic subunit (196 aa).

Residues 110–111, Lys-126, and 133–135 contribute to the substrate site; these read HR and KKE. Residues 142-196 form a disordered region; sequence GGIWRANRDGAVGERVDEDEEKKKPDMGPHGPILRPSRPGERGHGPVVRNHQLGS. Residues 147–168 show a composition bias toward basic and acidic residues; sequence ANRDGAVGERVDEDEEKKKPDM.

The protein belongs to the MoaE family. MOCS2B subfamily. As to quaternary structure, heterotetramer; composed of 2 small (MOCS2A) and 2 large (MOCS2B) subunits.

The protein localises to the cytoplasm. It catalyses the reaction 2 [molybdopterin-synthase sulfur-carrier protein]-C-terminal-Gly-aminoethanethioate + cyclic pyranopterin phosphate + H2O = molybdopterin + 2 [molybdopterin-synthase sulfur-carrier protein]-C-terminal Gly-Gly + 2 H(+). It functions in the pathway cofactor biosynthesis; molybdopterin biosynthesis. Functionally, catalytic subunit of the molybdopterin synthase complex, a complex that catalyzes the conversion of precursor Z into molybdopterin. Acts by mediating the incorporation of 2 sulfur atoms from thiocarboxylated MOCS2A into precursor Z to generate a dithiolene group. In Sclerotinia sclerotiorum (strain ATCC 18683 / 1980 / Ss-1) (White mold), this protein is Molybdopterin synthase catalytic subunit.